The chain runs to 337 residues: Ferredoxin--NADP reductase (337 aa).

7 residues coordinate FAD: E42, Q50, Y55, V97, F130, D292, and T333.

It belongs to the ferredoxin--NADP reductase type 2 family. As to quaternary structure, homodimer. Requires FAD as cofactor.

The catalysed reaction is 2 reduced [2Fe-2S]-[ferredoxin] + NADP(+) + H(+) = 2 oxidized [2Fe-2S]-[ferredoxin] + NADPH. This Streptococcus mutans serotype c (strain ATCC 700610 / UA159) protein is Ferredoxin--NADP reductase.